A 261-amino-acid chain; its full sequence is tRNA pseudouridine synthase A (261 aa).

The active-site Nucleophile is the D52. Y110 serves as a coordination point for substrate.

This sequence belongs to the tRNA pseudouridine synthase TruA family. In terms of assembly, homodimer.

It carries out the reaction uridine(38/39/40) in tRNA = pseudouridine(38/39/40) in tRNA. Formation of pseudouridine at positions 38, 39 and 40 in the anticodon stem and loop of transfer RNAs. This is tRNA pseudouridine synthase A from Blochmanniella pennsylvanica (strain BPEN).